The primary structure comprises 182 residues: Transcription termination/antitermination protein NusG (182 aa).

The KOW domain occupies 131 to 163 (VGEQVRIKSGPFANQVGEVQEIEADKFKLTVLV).

The protein belongs to the NusG family.

Its function is as follows. Participates in transcription elongation, termination and antitermination. The polypeptide is Transcription termination/antitermination protein NusG (Staphylococcus carnosus (strain TM300)).